The primary structure comprises 492 residues: Glutamate--tRNA ligase (492 aa).

Residues 13–23 (PSPTGTPHVGM) carry the 'HIGH' region motif. The short motif at 257 to 261 (KLSKR) is the 'KMSKS' region element. Residue Lys-260 coordinates ATP.

This sequence belongs to the class-I aminoacyl-tRNA synthetase family. Glutamate--tRNA ligase type 1 subfamily. Monomer.

Its subcellular location is the cytoplasm. It carries out the reaction tRNA(Glu) + L-glutamate + ATP = L-glutamyl-tRNA(Glu) + AMP + diphosphate. Functionally, catalyzes the attachment of glutamate to tRNA(Glu) in a two-step reaction: glutamate is first activated by ATP to form Glu-AMP and then transferred to the acceptor end of tRNA(Glu). This Mycolicibacterium paratuberculosis (strain ATCC BAA-968 / K-10) (Mycobacterium paratuberculosis) protein is Glutamate--tRNA ligase.